Here is a 364-residue protein sequence, read N- to C-terminus: Probable zinc transporter 10 (364 aa).

A signal peptide spans 1-28 (MTKSHVIFSASIALFLLLSISHFPGALS). The Extracellular segment spans residues 29 to 52 (QSNKDCQSKSNYSCIDKNKALDLK). A helical membrane pass occupies residues 53 to 73 (LLSIFSILITSLIGVCLPFFA). Residues 74-85 (RSIPAFQPEKSH) are Cytoplasmic-facing. A helical membrane pass occupies residues 86–106 (FLIVKSFASGIILSTGFMHVL). Topologically, residues 107-125 (PDSFEMLSSPCLNDNPWHK) are extracellular. A helical membrane pass occupies residues 126–146 (FPFAGFVAMMSAVFTLMVDSI). The Cytoplasmic segment spans residues 147–209 (TTSVFTKSGR…GSYLQLLRYR (63 aa)). A helical membrane pass occupies residues 210–230 (ILAIVLELGIVVQSIVIGLSV). Topologically, residues 231-241 (GDTNNTCTIKG) are extracellular. Residues 242–262 (LVAALCFHQMFEGMGLGGCIL) form a helical membrane-spanning segment. The Cytoplasmic portion of the chain corresponds to 263–271 (QAEYGWVKK). The chain crosses the membrane as a helical span at residues 272-292 (AVMAFFFAVTTPFGVVLGMAL). The Extracellular portion of the chain corresponds to 293–303 (SKTYKENSPES). Residues 304-324 (LITVGLLNASSAGLLIYMALV) form a helical membrane-spanning segment. Residues 325-343 (DLLAADFMGQKMQRSIKLQ) lie on the Cytoplasmic side of the membrane. Residues 344-364 (LKSYAAVLLGAGGMSVMAKWA) form a helical membrane-spanning segment.

It belongs to the ZIP transporter (TC 2.A.5) family.

The protein localises to the cell membrane. Its function is as follows. Probably mediates zinc uptake from the rhizosphere. The protein is Probable zinc transporter 10 (ZIP10) of Arabidopsis thaliana (Mouse-ear cress).